Reading from the N-terminus, the 380-residue chain is Anhydro-N-acetylmuramic acid kinase (380 aa).

9–16 contributes to the ATP binding site; the sequence is GTSVDGID.

The protein belongs to the anhydro-N-acetylmuramic acid kinase family.

It catalyses the reaction 1,6-anhydro-N-acetyl-beta-muramate + ATP + H2O = N-acetyl-D-muramate 6-phosphate + ADP + H(+). The protein operates within amino-sugar metabolism; 1,6-anhydro-N-acetylmuramate degradation. Its pathway is cell wall biogenesis; peptidoglycan recycling. Functionally, catalyzes the specific phosphorylation of 1,6-anhydro-N-acetylmuramic acid (anhMurNAc) with the simultaneous cleavage of the 1,6-anhydro ring, generating MurNAc-6-P. Is required for the utilization of anhMurNAc either imported from the medium or derived from its own cell wall murein, and thus plays a role in cell wall recycling. The chain is Anhydro-N-acetylmuramic acid kinase from Cyanothece sp. (strain PCC 7425 / ATCC 29141).